Reading from the N-terminus, the 377-residue chain is Presenilin-associated rhomboid-like protein, mitochondrial (377 aa).

Residues 1–52 constitute a mitochondrion transit peptide; it reads MAWRGWAQRGWGCGQAWTLPVCGGSYEELTAALAPSRLLRRRFNFFIQQKCG. Residues 53-99 lie on the Mitochondrial matrix side of the membrane; sequence FRKAPRKVEPRRSDTSSEAYKRSALIPPVEETAFYPSPYPIRTLVKP. Phosphoserine occurs at positions 65 and 68. The chain crosses the membrane as a helical span at residues 100-119; the sequence is LFFTVGFTGCAFGSAAIWQY. The Mitochondrial intermembrane portion of the chain corresponds to 120–165; it reads ESLKSKVQSYFDGIKADWLDSIRPQKEGDFRKEINKWWNNLSDGQR. The chain crosses the membrane as a helical span at residues 166 to 185; the sequence is TVTGIIAANVFVFCLWRVPS. Residues 186 to 205 lie on the Mitochondrial matrix side of the membrane; sequence LQRTMIRYFTSNPASKVLCS. The helical transmembrane segment at 206 to 228 threads the bilayer; the sequence is PMLLSTFSHFSLFHMAANMYVLW. Topologically, residues 229–242 are mitochondrial intermembrane; sequence SFSSSIVNILGQEQ. Residues 243 to 260 form a helical membrane-spanning segment; sequence FMAVYLSAGVISTFVSYV. The Mitochondrial matrix segment spans residues 261–270; sequence CKVATGRYGP. A helical transmembrane segment spans residues 271–287; it reads SLGASGAIMTVLAAVCT. Ser275 acts as the Nucleophile in catalysis. The Mitochondrial intermembrane segment spans residues 288-293; the sequence is KIPEGR. A helical transmembrane segment spans residues 294–316; that stretch reads LAIIFLPMFTFTAGNALKAIIAM. Residues 317–330 lie on the Mitochondrial matrix side of the membrane; the sequence is DTAGMILGWKFFDH. Residues 331 to 352 form a helical membrane-spanning segment; the sequence is AAHLGGALFGIWYITYGHELIW. His333 is an active-site residue. At 353–377 the chain is on the mitochondrial intermembrane side; the sequence is KNREPLVKIWHEMRTNSPKKGGGSK.

The protein belongs to the peptidase S54 family. As to quaternary structure, interacts with PSEN1 and PSEN2. Binds OPA1. Post-translationally, P-beta is proteolytically processed (beta-cleavage) in a PARL-dependent manner.

It localises to the mitochondrion inner membrane. The protein resides in the nucleus. It catalyses the reaction Cleaves type-1 transmembrane domains using a catalytic dyad composed of serine and histidine that are contributed by different transmembrane domains.. Functionally, required for the control of apoptosis during postnatal growth. Essential for proteolytic processing of an antiapoptotic form of OPA1 which prevents the release of mitochondrial cytochrome c in response to intrinsic apoptotic signals. Required for the maturation of PINK1 into its 52kDa mature form after its cleavage by mitochondrial-processing peptidase (MPP). Promotes cleavage of serine/threonine-protein phosphatase PGAM5 in damaged mitochondria in response to loss of mitochondrial membrane potential. Mediates differential cleavage of PINK1 and PGAM5 depending on the health status of mitochondria, disassociating from PINK1 and associating with PGAM5 in response to mitochondrial membrane potential loss. Required for processing of CLPB into a form with higher protein disaggregase activity by removing an autoinhibitory N-terminal peptide. Promotes processing of DIABLO/SMAC in the mitochondrion which is required for DIABLO apoptotic activity. Also required for cleavage of STARD7 and TTC19. Promotes changes in mitochondria morphology regulated by phosphorylation of P-beta domain. This chain is Presenilin-associated rhomboid-like protein, mitochondrial (PARL), found in Bos taurus (Bovine).